The chain runs to 275 residues: Calcium-binding protein 4 (275 aa).

Residues 1-12 (MTTEQARGQQGP) show a composition bias toward polar residues. Residues 1 to 112 (MTTEQARGQQ…SLHDAAQRTY (112 aa)) form a disordered region. Residues 38–55 (TRKRSKKERGLRGSRKRT) show a composition bias toward basic residues. S42 bears the Phosphoserine mark. 4 EF-hand domains span residues 129–164 (EELD…LGYM), 183–200 (GRVD…KLRE), 206–241 (LGVR…LLGE), and 243–275 (LAGP…LSRH). Ca(2+)-binding residues include D142, D144, D146, Y148, and E153. Ca(2+) is bound by residues D219, D221, D223, R225, E230, D256, N258, D260, T262, and E267.

In terms of assembly, interacts with CACNA1F and CACNA1D (via IQ domain) in a calcium independent manner. Interacts (via N-terminus) with UNC119. In terms of processing, phosphorylated. Phosphorylation levels change with the light conditions and regulate the activity. In terms of tissue distribution, expressed in retina and in the inner hair cells (IHC) of the cochlea.

It is found in the cytoplasm. The protein resides in the presynapse. In terms of biological role, involved in normal synaptic function through regulation of Ca(2+) influx and neurotransmitter release in photoreceptor synaptic terminals and in auditory transmission. Modulator of CACNA1D and CACNA1F, suppressing the calcium-dependent inactivation and shifting the activation range to more hyperpolarized voltages. The chain is Calcium-binding protein 4 (CABP4) from Homo sapiens (Human).